The chain runs to 127 residues: uncharacterized protein (127 aa).

The N-terminal stretch at 1–16 is a signal peptide; it reads MIKKIIFGIAILLSLS. The N-palmitoyl cysteine moiety is linked to residue cysteine 17. Residue cysteine 17 is the site of S-diacylglycerol cysteine attachment. The stretch at 56–101 forms a coiled coil; that stretch reads EVRKEIQEYRVEIVDINKKKRELYNSLSKEAQNFLAEQQKYKQKLS. The interval 101–127 is disordered; that stretch reads SISKLPTEDDSPNNTANSKDNKDTDTK.

It localises to the cell membrane. This is an uncharacterized protein from Rickettsia felis (strain ATCC VR-1525 / URRWXCal2) (Rickettsia azadi).